The following is a 401-amino-acid chain: Acetate kinase (401 aa).

Residue N7 participates in Mg(2+) binding. K14 provides a ligand contact to ATP. R96 is a binding site for substrate. Residue D153 is the Proton donor/acceptor of the active site. Residues 212 to 216 (HLGNG), 287 to 289 (DMR), and 335 to 339 (GIGEN) contribute to the ATP site. Residue E388 participates in Mg(2+) binding.

Belongs to the acetokinase family. As to quaternary structure, homodimer. Requires Mg(2+) as cofactor. It depends on Mn(2+) as a cofactor.

It is found in the cytoplasm. The catalysed reaction is acetate + ATP = acetyl phosphate + ADP. It participates in metabolic intermediate biosynthesis; acetyl-CoA biosynthesis; acetyl-CoA from acetate: step 1/2. Its function is as follows. Catalyzes the formation of acetyl phosphate from acetate and ATP. Can also catalyze the reverse reaction. This Microcystis aeruginosa (strain NIES-843 / IAM M-2473) protein is Acetate kinase.